The sequence spans 156 residues: Cyclic pyranopterin monophosphate synthase (156 aa).

Substrate contacts are provided by residues 75 to 77 (LCH) and 111 to 112 (ME). Residue D126 is part of the active site.

It belongs to the MoaC family. Homohexamer; trimer of dimers.

It carries out the reaction (8S)-3',8-cyclo-7,8-dihydroguanosine 5'-triphosphate = cyclic pyranopterin phosphate + diphosphate. It participates in cofactor biosynthesis; molybdopterin biosynthesis. Catalyzes the conversion of (8S)-3',8-cyclo-7,8-dihydroguanosine 5'-triphosphate to cyclic pyranopterin monophosphate (cPMP). The chain is Cyclic pyranopterin monophosphate synthase from Corynebacterium glutamicum (strain R).